A 217-amino-acid polypeptide reads, in one-letter code: Somatotropin (217 aa).

Positions 1-26 (MAPGSWFSPLFIAVITLGLQWPKEAA) are cleaved as a signal peptide. Zn(2+) is bound at residue histidine 46. Cysteine 79 and cysteine 190 are oxidised to a cystine. Glutamate 199 provides a ligand contact to Zn(2+). Cysteine 207 and cysteine 215 are joined by a disulfide.

The protein belongs to the somatotropin/prolactin family.

The protein localises to the secreted. In terms of biological role, growth hormone plays an important role in growth control. The chain is Somatotropin (GH) from Struthio camelus (Common ostrich).